The sequence spans 273 residues: Small ribosomal subunit protein uS3 (273 aa).

In terms of domain architecture, KH type-2 spans 43–111 (IRQLMSTGME…QVQLNILEVK (69 aa)). Residues 218–227 (QQAAAAPSRG) are compositionally biased toward low complexity. Residues 218-273 (QQAAAAPSRGRAGDRPGRPGGDRRRRNDRPAAEAAPAAVEAPAAEAAAPAAEGGQA) form a disordered region. Over residues 228 to 239 (RAGDRPGRPGGD) the composition is skewed to basic and acidic residues. Residues 249-273 (AEAAPAAVEAPAAEAAAPAAEGGQA) are compositionally biased toward low complexity.

Belongs to the universal ribosomal protein uS3 family. As to quaternary structure, part of the 30S ribosomal subunit. Forms a tight complex with proteins S10 and S14.

Binds the lower part of the 30S subunit head. Binds mRNA in the 70S ribosome, positioning it for translation. The sequence is that of Small ribosomal subunit protein uS3 from Paenarthrobacter aurescens (strain TC1).